A 455-amino-acid polypeptide reads, in one-letter code: Probable glycine dehydrogenase (decarboxylating) subunit 1 (455 aa).

The protein belongs to the GcvP family. N-terminal subunit subfamily. As to quaternary structure, the glycine cleavage system is composed of four proteins: P, T, L and H. In this organism, the P 'protein' is a heterodimer of two subunits.

It carries out the reaction N(6)-[(R)-lipoyl]-L-lysyl-[glycine-cleavage complex H protein] + glycine + H(+) = N(6)-[(R)-S(8)-aminomethyldihydrolipoyl]-L-lysyl-[glycine-cleavage complex H protein] + CO2. In terms of biological role, the glycine cleavage system catalyzes the degradation of glycine. The P protein binds the alpha-amino group of glycine through its pyridoxal phosphate cofactor; CO(2) is released and the remaining methylamine moiety is then transferred to the lipoamide cofactor of the H protein. This is Probable glycine dehydrogenase (decarboxylating) subunit 1 from Saccharolobus islandicus (strain M.16.27) (Sulfolobus islandicus).